Here is a 368-residue protein sequence, read N- to C-terminus: Cytochrome P450 119 (368 aa).

The heme site is built by His76, Arg80, Thr257, Arg259, His315, and Cys317.

The protein belongs to the cytochrome P450 family. Heme is required as a cofactor.

Its subcellular location is the cytoplasm. It catalyses the reaction 2 a phenolic donor + H2O2 = 2 a phenolic radical donor + 2 H2O. Its function is as follows. The endogenous substrate is not known. In vitro, catalyzes the H(2)O(2)-dependent epoxidation of styrene, cis-beta-methylstyrene, and cis-stilbene with retention of stereochemistry. Is able to use cumene hydroperoxide (CHP) or tert-butyl hydroperoxide (TBHP) instead of H(2)O(2) as the electron acceptor. Can also hydroxylate fatty acids such as lauric acid. This chain is Cytochrome P450 119 (cyp119), found in Sulfolobus acidocaldarius (strain ATCC 33909 / DSM 639 / JCM 8929 / NBRC 15157 / NCIMB 11770).